We begin with the raw amino-acid sequence, 120 residues long: MSKSGRLTTHVLDTALGRPAHGLKIDLYRLEGDARHLIRTVHTNSDGRVDGPLMEGAGFATGTYELVFHAGDYFRSAGVKLPDPAFLELVPLRFGIADADSHYHVPLLLSPYGYSTYRGS.

The substrate site is built by His10, Arg48, and Tyr117.

It belongs to the transthyretin family. 5-hydroxyisourate hydrolase subfamily. In terms of assembly, homotetramer.

The catalysed reaction is 5-hydroxyisourate + H2O = 5-hydroxy-2-oxo-4-ureido-2,5-dihydro-1H-imidazole-5-carboxylate + H(+). Its function is as follows. Catalyzes the hydrolysis of 5-hydroxyisourate (HIU) to 2-oxo-4-hydroxy-4-carboxy-5-ureidoimidazoline (OHCU). In Rhizobium meliloti (strain 1021) (Ensifer meliloti), this protein is 5-hydroxyisourate hydrolase 2.